Here is a 549-residue protein sequence, read N- to C-terminus: Hydroxylamine reductase (549 aa).

Residues cysteine 3, cysteine 6, cysteine 15, and cysteine 21 each coordinate [4Fe-4S] cluster. Residues histidine 244, glutamate 268, cysteine 313, cysteine 405, cysteine 433, cysteine 458, glutamate 492, and lysine 494 each contribute to the hybrid [4Fe-2O-2S] cluster site. A Cysteine persulfide modification is found at cysteine 405.

This sequence belongs to the HCP family. It depends on [4Fe-4S] cluster as a cofactor. Hybrid [4Fe-2O-2S] cluster is required as a cofactor.

The protein resides in the cytoplasm. It carries out the reaction A + NH4(+) + H2O = hydroxylamine + AH2 + H(+). Functionally, catalyzes the reduction of hydroxylamine to form NH(3) and H(2)O. The sequence is that of Hydroxylamine reductase from Crocosphaera subtropica (strain ATCC 51142 / BH68) (Cyanothece sp. (strain ATCC 51142)).